The chain runs to 95 residues: 6 kDa early secretory antigenic target (95 aa).

2 helical membrane passes run Ile11–Trp43 and Glu49–Ser85. Residues Gln56 to Glu87 are a coiled coil.

The protein belongs to the WXG100 family. ESAT-6 subfamily. In terms of assembly, forms a tight 1:1 complex with EsxB (CFP-10).

It is found in the secreted. Its subcellular location is the host membrane. Its function is as follows. A secreted protein. Acts as a strong host T-cell antigen. Plays a number of roles in modulating the host's immune response to infection as well as being responsible for bacterial escape into the host cytoplasm. The chain is 6 kDa early secretory antigenic target (esxA) from Mycobacterium bovis (strain ATCC BAA-935 / AF2122/97).